Reading from the N-terminus, the 219-residue chain is Histone H1.4 (219 aa).

A compositionally biased stretch (low complexity) spans 1 to 15 (MSETAPAAPAAPAPA). Residues 1–41 (MSETAPAAPAAPAPAEKTPVKKKARKAAGGAKRKTSGPPVS) form a disordered region. S2 is modified (N-acetylserine). Residue S2 is modified to Phosphoserine. At K17 the chain carries N6-acetyllysine. T18 bears the Phosphothreonine mark. A compositionally biased stretch (basic residues) spans 20 to 35 (VKKKARKAAGGAKRKT). K26 carries the N6-acetyllysine; alternate modification. At K26 the chain carries N6-methyllysine; alternate. Position 34 is an N6-(beta-hydroxybutyryl)lysine; alternate (K34). At K34 the chain carries N6-succinyllysine; alternate. Residue S36 is modified to Phosphoserine. Residues 36 to 109 (SGPPVSELIT…GASGSFKLNK (74 aa)) enclose the H15 domain. N6-(beta-hydroxybutyryl)lysine is present on K52. Position 54 is a citrulline (R54). 4 positions are modified to N6-(beta-hydroxybutyryl)lysine: K64, K85, K90, and K106. Residues 92 to 219 (TLVQTKGTGA…KPKKTAAKKK (128 aa)) are disordered. Residues 119–140 (KAKRAGAAKAKKPAGAAKKPKK) are compositionally biased toward basic residues. T146 is modified (phosphothreonine). 2 stretches are compositionally biased toward basic residues: residues 149–160 (KSTKKTPKKAKK) and 168–185 (KKAK…KKAP). The residue at position 150 (S150) is an ADP-ribosylserine. S187 bears the Phosphoserine mark. Residues 192–219 (KTVKPKAAKPKTSKPKAAKPKKTAAKKK) are compositionally biased toward basic residues.

This sequence belongs to the histone H1/H5 family. In terms of processing, citrullination at Arg-54 (H1R54ci) by PADI4 takes place within the DNA-binding site of H1 and results in its displacement from chromatin and global chromatin decondensation, thereby promoting pluripotency and stem cell maintenance. ADP-ribosylated on Ser-55, Ser-113 and Ser-150 in response to DNA damage. Post-translationally, H1 histones are progressively phosphorylated during the cell cycle, becoming maximally phosphorylated during late G2 phase and M phase, and being dephosphorylated sharply thereafter. In terms of processing, acetylated at Lys-26. Deacetylated at Lys-26 by SIRT1. Hydroxybutyrylation of histones is induced by starvation.

Its subcellular location is the nucleus. The protein resides in the chromosome. Histone H1 protein binds to linker DNA between nucleosomes forming the macromolecular structure known as the chromatin fiber. Histones H1 are necessary for the condensation of nucleosome chains into higher-order structured fibers. Also acts as a regulator of individual gene transcription through chromatin remodeling, nucleosome spacing and DNA methylation. This chain is Histone H1.4, found in Mus musculus (Mouse).